Here is an 85-residue protein sequence, read N- to C-terminus: Cytochrome c6 (85 aa).

4 residues coordinate heme c: cysteine 14, cysteine 17, histidine 18, and methionine 58.

It belongs to the cytochrome c family. PetJ subfamily. Monomer. Post-translationally, binds 1 heme c group covalently per subunit.

The protein localises to the cellular thylakoid lumen. Functionally, functions as an electron carrier between membrane-bound cytochrome b6-f and photosystem I in oxygenic photosynthesis. The protein is Cytochrome c6 (petJ) of Leptolyngbya boryana (Plectonema boryanum).